The primary structure comprises 98 residues: Large ribosomal subunit protein eL30 (98 aa).

This sequence belongs to the eukaryotic ribosomal protein eL30 family.

The chain is Large ribosomal subunit protein eL30 from Methanosphaera stadtmanae (strain ATCC 43021 / DSM 3091 / JCM 11832 / MCB-3).